Consider the following 173-residue polypeptide: Disulfide bond formation protein B (173 aa).

At 1 to 11 (MNALQWSFRAQ) the chain is on the cytoplasmic side. Residues 12–28 (CLTGFLFCTGLLAYAIF) traverse the membrane as a helical segment. The Periplasmic segment spans residues 29 to 46 (LQLHQGLEPCPLCIFQRI). C38 and C41 are oxidised to a cystine. The chain crosses the membrane as a helical span at residues 47–63 (AFAVLGILFLIAGLYNS). The Cytoplasmic portion of the chain corresponds to 64–70 (SNVYTRK). A helical transmembrane segment spans residues 71–88 (AYGLLIFLTAAIGTGIAG). Residues 89-145 (RHVWVQLMPHNTISSCGSPLSFLSETMGPFEVFRTVLTGTSDCGNIDWRFLGLSMPM) lie on the Periplasmic side of the membrane. C104 and C131 form a disulfide bridge. The helical transmembrane segment at 146-164 (WSMFWFVALALLGLLVGFK) threads the bilayer. The Cytoplasmic portion of the chain corresponds to 165–173 (AERRKPLFS).

This sequence belongs to the DsbB family.

The protein localises to the cell inner membrane. Required for disulfide bond formation in some periplasmic proteins. Acts by oxidizing the DsbA protein. The protein is Disulfide bond formation protein B of Xylella fastidiosa (strain 9a5c).